Consider the following 363-residue polypeptide: Probable endopolygalacturonase A (363 aa).

The N-terminal stretch at 1-20 (MQLLQSSVIAATVGAALVAA) is a signal peptide. A propeptide spanning residues 21-28 (APVELEAR) is cleaved from the precursor. Cysteine 31 and cysteine 46 are oxidised to a cystine. 6 PbH1 repeats span residues 158 to 187 (SDNL…DIGS), 188 to 209 (STYI…AINS), 210 to 230 (GSHI…SIGS), 239 to 260 (VEDV…RIKT), 268 to 290 (VSNV…VVEQ), and 302 to 347 (TNGI…SITG). A glycan (N-linked (GlcNAc...) asparagine) is linked at asparagine 162. Aspartate 202 (proton donor) is an active-site residue. A disulfide bond links cysteine 204 and cysteine 220. The active site involves histidine 224. Disulfide bonds link cysteine 330–cysteine 335 and cysteine 354–cysteine 363.

Belongs to the glycosyl hydrolase 28 family.

The protein resides in the secreted. It catalyses the reaction (1,4-alpha-D-galacturonosyl)n+m + H2O = (1,4-alpha-D-galacturonosyl)n + (1,4-alpha-D-galacturonosyl)m.. Functionally, involved in maceration and soft-rotting of plant tissue. Hydrolyzes the 1,4-alpha glycosidic bonds of de-esterified pectate in the smooth region of the plant cell wall. The polypeptide is Probable endopolygalacturonase A (pgaA) (Aspergillus parasiticus).